A 306-amino-acid polypeptide reads, in one-letter code: Beta-lactamase 1 (306 aa).

The first 43 residues, 1–43 (MKNKKMLKIGMCVGILGLSITSLVTFTGGALQVEAKEKTGQVK), serve as a signal peptide directing secretion. Catalysis depends on serine 89, which acts as the Acyl-ester intermediate. Glutamate 185 serves as the catalytic Proton acceptor. 251–253 (KSG) contacts substrate.

The protein belongs to the class-A beta-lactamase family.

It localises to the secreted. It catalyses the reaction a beta-lactam + H2O = a substituted beta-amino acid. Functionally, acts preferentially on penicillins. This Bacillus cereus protein is Beta-lactamase 1 (penPC).